The following is a 160-amino-acid chain: Large ribosomal subunit protein uL15 (160 aa).

Residues 1–13 (MKLHELSDNDGAA) show a composition bias toward basic and acidic residues. The segment at 1–42 (MKLHELSDNDGAAKKRKRVGRGPGSGTGKMGGRGIKGQKSRS) is disordered. Residues 21–35 (RGPGSGTGKMGGRGI) show a composition bias toward gly residues.

This sequence belongs to the universal ribosomal protein uL15 family. Part of the 50S ribosomal subunit.

Binds to the 23S rRNA. This Roseobacter denitrificans (strain ATCC 33942 / OCh 114) (Erythrobacter sp. (strain OCh 114)) protein is Large ribosomal subunit protein uL15.